The chain runs to 505 residues: UDP-N-acetylmuramyl-tripeptide synthetase (505 aa).

S35 is a UDP-N-acetyl-alpha-D-muramoyl-L-alanyl-D-glutamate binding site. 118 to 124 (GTDGKSS) lines the ATP pocket. UDP-N-acetyl-alpha-D-muramoyl-L-alanyl-D-glutamate is bound by residues 163–164 (ST), T190, and R200. Position 232 is an N6-carboxylysine (K232).

It belongs to the MurCDEF family. MurE subfamily. Post-translationally, carboxylation is probably crucial for Mg(2+) binding and, consequently, for the gamma-phosphate positioning of ATP.

The protein resides in the cytoplasm. Its pathway is cell wall biogenesis; peptidoglycan biosynthesis. Catalyzes the addition of an amino acid to the nucleotide precursor UDP-N-acetylmuramoyl-L-alanyl-D-glutamate (UMAG) in the biosynthesis of bacterial cell-wall peptidoglycan. In Borreliella afzelii (strain PKo) (Borrelia afzelii), this protein is UDP-N-acetylmuramyl-tripeptide synthetase.